Here is an 83-residue protein sequence, read N- to C-terminus: Small ribosomal subunit protein uS17 (83 aa).

This sequence belongs to the universal ribosomal protein uS17 family. Part of the 30S ribosomal subunit.

Functionally, one of the primary rRNA binding proteins, it binds specifically to the 5'-end of 16S ribosomal RNA. This Campylobacter curvus (strain 525.92) protein is Small ribosomal subunit protein uS17.